The primary structure comprises 127 residues: E3 ubiquitin-protein ligase PPP1R11 (127 aa).

Disordered regions lie at residues Met-1–Gly-55 and Ala-70–His-127. Ala-2 bears the N-acetylalanine mark. Positions Glu-11–Glu-23 are enriched in low complexity. Over residues Lys-40–Gly-55 the composition is skewed to basic and acidic residues. Positions His-53 to Cys-63 are atypical RING finger domain 1. Ser-74 and Ser-75 each carry phosphoserine. Thr-76 is subject to Phosphothreonine. Ser-78 is subject to Phosphoserine. Positions Cys-86–His-95 are atypical RING finger domain 2. The span at His-90 to Arg-100 shows a compositional bias: basic residues. A compositionally biased stretch (pro residues) spans Thr-103–His-127. Thr-110 is subject to Phosphothreonine.

As to quaternary structure, interacts with TLR2 and UBE2D2. Post-translationally, auto-ubiquitinated.

It carries out the reaction S-ubiquitinyl-[E2 ubiquitin-conjugating enzyme]-L-cysteine + [acceptor protein]-L-lysine = [E2 ubiquitin-conjugating enzyme]-L-cysteine + N(6)-ubiquitinyl-[acceptor protein]-L-lysine.. It functions in the pathway protein modification; protein ubiquitination. Its function is as follows. Atypical E3 ubiquitin-protein ligase which ubiquitinates TLR2 at 'Lys-754' leading to its degradation by the proteasome. Plays a role in regulating inflammatory cytokine release and gram-positive bacterial clearance by functioning, in part, through the ubiquitination and degradation of TLR2. Inhibitor of protein phosphatase 1. In Rattus norvegicus (Rat), this protein is E3 ubiquitin-protein ligase PPP1R11 (Ppp1r11).